The chain runs to 112 residues: UPF0102 protein CFF8240_0294 (112 aa).

It belongs to the UPF0102 family.

The sequence is that of UPF0102 protein CFF8240_0294 from Campylobacter fetus subsp. fetus (strain 82-40).